The primary structure comprises 347 residues: Protein pelota homolog (347 aa).

It belongs to the eukaryotic release factor 1 family. Pelota subfamily. In terms of assembly, monomer. A divalent metal cation is required as a cofactor.

It localises to the cytoplasm. In terms of biological role, may function in recognizing stalled ribosomes, interact with stem-loop structures in stalled mRNA molecules, and effect endonucleolytic cleavage of the mRNA. May play a role in the release non-functional ribosomes and degradation of damaged mRNAs. Has endoribonuclease activity. The polypeptide is Protein pelota homolog (Methanococcoides burtonii (strain DSM 6242 / NBRC 107633 / OCM 468 / ACE-M)).